The primary structure comprises 205 residues: Methylthioribulose-1-phosphate dehydratase (205 aa).

Residues His-96 and His-98 each coordinate Zn(2+).

The protein belongs to the aldolase class II family. MtnB subfamily. It depends on Zn(2+) as a cofactor.

The enzyme catalyses 5-(methylsulfanyl)-D-ribulose 1-phosphate = 5-methylsulfanyl-2,3-dioxopentyl phosphate + H2O. Its pathway is amino-acid biosynthesis; L-methionine biosynthesis via salvage pathway; L-methionine from S-methyl-5-thio-alpha-D-ribose 1-phosphate: step 2/6. Its function is as follows. Catalyzes the dehydration of methylthioribulose-1-phosphate (MTRu-1-P) into 2,3-diketo-5-methylthiopentyl-1-phosphate (DK-MTP-1-P). The protein is Methylthioribulose-1-phosphate dehydratase of Pseudomonas aeruginosa (strain ATCC 15692 / DSM 22644 / CIP 104116 / JCM 14847 / LMG 12228 / 1C / PRS 101 / PAO1).